The primary structure comprises 562 residues: Sensor histidine kinase MtrB (562 aa).

Helical transmembrane passes span V42–T62 and G213–V233. An HAMP domain is found at R235–T287. The 218-residue stretch at D302–R519 folds into the Histidine kinase domain. The tract at residues S526–R562 is disordered. The segment covering P536–R551 has biased composition (polar residues). Over residues R553–R562 the composition is skewed to basic and acidic residues.

Its subcellular location is the cell membrane. The catalysed reaction is ATP + protein L-histidine = ADP + protein N-phospho-L-histidine.. Functionally, member of the two-component regulatory system MtrA/MtrB. Seems to function as a membrane-associated protein kinase that phosphorylates MtrA in response to environmental signals. The chain is Sensor histidine kinase MtrB (mtrB) from Mycobacterium leprae (strain TN).